The following is a 92-amino-acid chain: MGRSLKKGPFVDEHLMKKVEAQVNAERKSVIKTWSRRSTIFPNFVGLTIAVYDGRKHVPVYVQEDMVGHKLGEFAPTRTYRGHAADDKKTRR.

The protein belongs to the universal ribosomal protein uS19 family.

Protein S19 forms a complex with S13 that binds strongly to the 16S ribosomal RNA. This chain is Small ribosomal subunit protein uS19, found in Lactococcus lactis subsp. lactis (strain IL1403) (Streptococcus lactis).